A 597-amino-acid polypeptide reads, in one-letter code: Elongation factor 4 (597 aa).

One can recognise a tr-type G domain in the interval 2–184 (KNIRNFSIIA…RLVRDIPAPE (183 aa)). GTP contacts are provided by residues 14-19 (DHGKST) and 131-134 (NKID).

This sequence belongs to the TRAFAC class translation factor GTPase superfamily. Classic translation factor GTPase family. LepA subfamily.

It localises to the cell inner membrane. The enzyme catalyses GTP + H2O = GDP + phosphate + H(+). Its function is as follows. Required for accurate and efficient protein synthesis under certain stress conditions. May act as a fidelity factor of the translation reaction, by catalyzing a one-codon backward translocation of tRNAs on improperly translocated ribosomes. Back-translocation proceeds from a post-translocation (POST) complex to a pre-translocation (PRE) complex, thus giving elongation factor G a second chance to translocate the tRNAs correctly. Binds to ribosomes in a GTP-dependent manner. This Edwardsiella ictaluri (strain 93-146) protein is Elongation factor 4.